A 190-amino-acid polypeptide reads, in one-letter code: Guanylate kinase (190 aa).

Positions 7 to 186 (GKLIVFSAPS…AVDDVEAAIV (180 aa)) constitute a Guanylate kinase-like domain. Residue 14–21 (APSGAGKT) participates in ATP binding.

The protein belongs to the guanylate kinase family.

It localises to the cytoplasm. It carries out the reaction GMP + ATP = GDP + ADP. Its function is as follows. Essential for recycling GMP and indirectly, cGMP. This chain is Guanylate kinase, found in Chlorobium chlorochromatii (strain CaD3).